The following is a 124-amino-acid chain: MDTTHNDNTPQRLMITDMRPLSLETIITSLTRDIITHKFIYLINHECIVRKLDERQATFTFLVNYEMKLLHKVGSTKYKKYTEYNTKYGTFPMPIFINHDGFLECIGIKPTKHTPIIYKYDLNP.

The short motif at 121–124 is the DLNP; interaction with MAP1B element; it reads DLNP.

It belongs to the pneumovirus non-structural protein 2 family. In terms of assembly, monomer (instable). Homomultimer. Heteromultimer with NS1. Interacts with host RIGI (via N-terminus); this interaction prevents host signaling pathway involved in interferon production. Interacts with host MAP1B/microtubule-associated protein 1B.

Its subcellular location is the host mitochondrion. Its function is as follows. Plays a major role in antagonizing the type I IFN-mediated antiviral response. Acts cooperatively with NS1 to repress activation and nuclear translocation of host IFN-regulatory factor IRF3. Interacts with the host cytoplasmic sensor of viral nucleic acids RIGI and prevents the interaction with its downstream partner MAVS. Together with NS2, participates in the proteasomal degradation of host STAT2, IRF3, IRF7, TBK1 and RIGI through a NS-degradasome involving CUL2 and Elongin-C. The degradasome requires an intact mitochondrial MAVS. Induces host SOCS1 expression. Induces activation of NF-kappa-B. Suppresses premature apoptosis by an NF-kappa-B-dependent, interferon-independent mechanism promoting continued viral replication. The chain is Non-structural protein 2 (1B) from Human respiratory syncytial virus A (strain A2).